The sequence spans 189 residues: CASP-like protein 1U2 (189 aa).

Topologically, residues 1-24 (MFGSDDSGCHVMDDDVAPPANGSK) are cytoplasmic. The chain crosses the membrane as a helical span at residues 25–45 (AVTLLLRLITLALALTSAVLM). At 46–71 (ATASECTIYGLDGATATTVTFKDYQP) the chain is on the extracellular side. Residues 72-92 (FIYLVGSNIAATILEVAAIYV) traverse the membrane as a helical segment. Residues 93 to 109 (QVGKGDDVEDAPMIPRV) are Cytoplasmic-facing. Residues 110–130 (VLVVVDVAVQMLLYSATGAVF) traverse the membrane as a helical segment. The Extracellular segment spans residues 131–158 (AAVMAYGPQISACTGAAGHFCEQVQRSK). A helical membrane pass occupies residues 159 to 179 (IISLAASLSAVLAAVAKDVAL). Topologically, residues 180 to 189 (PCSVWPHPSS) are cytoplasmic.

This sequence belongs to the Casparian strip membrane proteins (CASP) family. In terms of assembly, homodimer and heterodimers.

The protein localises to the cell membrane. This chain is CASP-like protein 1U2, found in Sorghum bicolor (Sorghum).